The chain runs to 107 residues: Ferredoxin Fdx8 (107 aa).

2 consecutive 4Fe-4S ferredoxin-type domains span residues 1 to 31 (MAYV…GPLA) and 50 to 79 (LQLY…DEDE). [4Fe-4S] cluster is bound by residues C9, C13, C17, C21, C59, C62, C65, and C69.

Requires [4Fe-4S] cluster as cofactor.

Ferredoxins are iron-sulfur proteins that transfer electrons in a wide variety of metabolic reactions. Fdx2 can receive electrons from both FdR_A and FdR_B ferredoxin reductases, with a preference for FdR_B compared with FdR_A, and transfer the electrons to the cytochrome P450 CYP260A1. In Sorangium cellulosum (strain So ce56) (Polyangium cellulosum (strain So ce56)), this protein is Ferredoxin Fdx8.